The sequence spans 322 residues: Probable uridine nucleosidase 2 (322 aa).

Residues aspartate 14 and histidine 246 contribute to the active site.

This sequence belongs to the IUNH family. In terms of assembly, component of the NSH heterocomplex made of URH1/NSH1 and URH2/NSH2 which exhibits strong xanthosine nucleosidase activity. Interacts with URH1. In terms of tissue distribution, expressed in roots, seedlings and flowers.

It localises to the cytoplasm. It is found in the cytosol. The enzyme catalyses uridine + H2O = D-ribose + uracil. It catalyses the reaction inosine + H2O = hypoxanthine + D-ribose. It carries out the reaction xanthosine + H2O = D-ribose + xanthine. Functionally, involved in pyrimidine breakdown, especially in response to dark stress. In the presence of URH1, exhibits efficient inosine and xanthosine hydrolytic activities. Support inosine breakdown especially during the late phase of senescence. In Arabidopsis thaliana (Mouse-ear cress), this protein is Probable uridine nucleosidase 2.